The sequence spans 593 residues: Methionine--tRNA ligase, mitochondrial (593 aa).

Residues 1-29 (MLRTSVLRLLGRTGASRLSLLEDFGPRYY) constitute a mitochondrion transit peptide. Positions 52 to 62 (FYVNAAPHIGH) match the 'HIGH' region motif. The 'KMSKS' region signature appears at 347 to 351 (KMSKS). Lysine 350 provides a ligand contact to ATP.

The protein belongs to the class-I aminoacyl-tRNA synthetase family.

It localises to the mitochondrion matrix. The catalysed reaction is tRNA(Met) + L-methionine + ATP = L-methionyl-tRNA(Met) + AMP + diphosphate. In Homo sapiens (Human), this protein is Methionine--tRNA ligase, mitochondrial (MARS2).